The following is a 357-amino-acid chain: UDP-N-acetylglucosamine--N-acetylmuramyl-(pentapeptide) pyrophosphoryl-undecaprenol N-acetylglucosamine transferase (357 aa).

Residues serine 13–glycine 15, arginine 166, serine 197, and glutamine 292 each bind UDP-N-acetyl-alpha-D-glucosamine.

The protein belongs to the glycosyltransferase 28 family. MurG subfamily.

The protein localises to the cell membrane. It carries out the reaction di-trans,octa-cis-undecaprenyl diphospho-N-acetyl-alpha-D-muramoyl-L-alanyl-D-glutamyl-meso-2,6-diaminopimeloyl-D-alanyl-D-alanine + UDP-N-acetyl-alpha-D-glucosamine = di-trans,octa-cis-undecaprenyl diphospho-[N-acetyl-alpha-D-glucosaminyl-(1-&gt;4)]-N-acetyl-alpha-D-muramoyl-L-alanyl-D-glutamyl-meso-2,6-diaminopimeloyl-D-alanyl-D-alanine + UDP + H(+). It functions in the pathway cell wall biogenesis; peptidoglycan biosynthesis. Functionally, cell wall formation. Catalyzes the transfer of a GlcNAc subunit on undecaprenyl-pyrophosphoryl-MurNAc-pentapeptide (lipid intermediate I) to form undecaprenyl-pyrophosphoryl-MurNAc-(pentapeptide)GlcNAc (lipid intermediate II). The polypeptide is UDP-N-acetylglucosamine--N-acetylmuramyl-(pentapeptide) pyrophosphoryl-undecaprenol N-acetylglucosamine transferase (Clostridium novyi (strain NT)).